The primary structure comprises 101 residues: MPKTSAIERNKKRIRLAAQHAAKRAELKAILANPATTDDEFFGAQKKLQKLPKNSNKIRIRNRCSLSGRPRAYIGKFGVSRIQFRELALAGKIPGVTKSSW.

It belongs to the universal ribosomal protein uS14 family. In terms of assembly, part of the 30S ribosomal subunit. Contacts proteins S3 and S10.

In terms of biological role, binds 16S rRNA, required for the assembly of 30S particles and may also be responsible for determining the conformation of the 16S rRNA at the A site. This chain is Small ribosomal subunit protein uS14, found in Opitutus terrae (strain DSM 11246 / JCM 15787 / PB90-1).